Consider the following 108-residue polypeptide: MTVARSLLLFVLAALLEIGGAWLVWQGIREHKGWIWVGLGVISLGLYGLVATMQPDANFGRILAAYGGIFVAGSLLWAVVMDGFRPDRFDIAGALICLVGVGVIMYAR.

4 helical membrane-spanning segments follow: residues 8-28 (LLFVLAALLEIGGAWLVWQGI), 33-53 (GWIWVGLGVISLGLYGLVATM), 62-82 (ILAAYGGIFVAGSLLWAVVMD), and 87-107 (DRFDIAGALICLVGVGVIMYA).

Belongs to the UPF0060 family.

It is found in the cell membrane. The polypeptide is UPF0060 membrane protein RER_49640 (Rhodococcus erythropolis (strain PR4 / NBRC 100887)).